We begin with the raw amino-acid sequence, 215 residues long: Pyridoxine/pyridoxamine 5'-phosphate oxidase (215 aa).

Substrate-binding positions include 9-12 (RRDY) and Lys69. FMN is bound by residues 64-69 (RVLLLK), 79-80 (FS), Lys86, and Gln108. Substrate-binding residues include Tyr126, Arg130, and Ser134. FMN-binding positions include 143-144 (QS) and Trp188. 194–196 (RLH) serves as a coordination point for substrate. Arg198 contributes to the FMN binding site.

This sequence belongs to the pyridoxamine 5'-phosphate oxidase family. Homodimer. Requires FMN as cofactor.

The catalysed reaction is pyridoxamine 5'-phosphate + O2 + H2O = pyridoxal 5'-phosphate + H2O2 + NH4(+). It carries out the reaction pyridoxine 5'-phosphate + O2 = pyridoxal 5'-phosphate + H2O2. It functions in the pathway cofactor metabolism; pyridoxal 5'-phosphate salvage; pyridoxal 5'-phosphate from pyridoxamine 5'-phosphate: step 1/1. It participates in cofactor metabolism; pyridoxal 5'-phosphate salvage; pyridoxal 5'-phosphate from pyridoxine 5'-phosphate: step 1/1. In terms of biological role, catalyzes the oxidation of either pyridoxine 5'-phosphate (PNP) or pyridoxamine 5'-phosphate (PMP) into pyridoxal 5'-phosphate (PLP). The chain is Pyridoxine/pyridoxamine 5'-phosphate oxidase from Ectopseudomonas mendocina (strain ymp) (Pseudomonas mendocina).